A 395-amino-acid chain; its full sequence is Pyruvate synthase subunit PorA (395 aa).

In terms of assembly, heterotetramer of one alpha, one beta, one delta and one gamma chain.

It catalyses the reaction 2 oxidized [2Fe-2S]-[ferredoxin] + pyruvate + CoA = 2 reduced [2Fe-2S]-[ferredoxin] + acetyl-CoA + CO2 + H(+). The polypeptide is Pyruvate synthase subunit PorA (porA) (Pyrococcus horikoshii (strain ATCC 700860 / DSM 12428 / JCM 9974 / NBRC 100139 / OT-3)).